The following is a 246-amino-acid chain: Metallo-beta-lactamase type 2 (246 aa).

The N-terminal stretch at 1–20 (MKKLFVLCVCFFCSITAAGA) is a signal peptide. Residues His95, His97, Asp99, His157, and Cys176 each contribute to the Zn(2+) site. Asp99 lines the a beta-lactam pocket. Lys179 and Asn185 together coordinate a beta-lactam. A Zn(2+)-binding site is contributed by His215.

The protein belongs to the metallo-beta-lactamase superfamily. Class-B beta-lactamase family. In terms of assembly, monomer. Requires Zn(2+) as cofactor.

The protein resides in the periplasm. The enzyme catalyses a beta-lactam + H2O = a substituted beta-amino acid. Functionally, confers resistance to the different beta-lactam antibiotics (penicillin, cephalosporin and carbapenem) via the hydrolysis of the beta-lactam ring. Exhibits higher catalytic efficiency toward ticarcillin and piperacillin than blaIMP-1. Exhibits catalytic activity for carbapenem compounds, but has a preference for imipenem and ertapenem over meropenem. Has high efficiency for the hydrolysis of cefuroxime. Exhibits hydrolysis of all cephalosporins tested. Exhibits no hydrolysis of temocillin, the 6-alpha-methoxy semisynthetic derivative of ticarcillin. The chain is Metallo-beta-lactamase type 2 from Pseudomonas aeruginosa.